A 245-amino-acid chain; its full sequence is 1-(5-phosphoribosyl)-5-[(5-phosphoribosylamino)methylideneamino] imidazole-4-carboxamide isomerase (245 aa).

D8 serves as the catalytic Proton acceptor. D130 acts as the Proton donor in catalysis.

This sequence belongs to the HisA/HisF family.

The protein localises to the cytoplasm. The enzyme catalyses 1-(5-phospho-beta-D-ribosyl)-5-[(5-phospho-beta-D-ribosylamino)methylideneamino]imidazole-4-carboxamide = 5-[(5-phospho-1-deoxy-D-ribulos-1-ylimino)methylamino]-1-(5-phospho-beta-D-ribosyl)imidazole-4-carboxamide. It participates in amino-acid biosynthesis; L-histidine biosynthesis; L-histidine from 5-phospho-alpha-D-ribose 1-diphosphate: step 4/9. The polypeptide is 1-(5-phosphoribosyl)-5-[(5-phosphoribosylamino)methylideneamino] imidazole-4-carboxamide isomerase (Pseudomonas putida (strain W619)).